A 378-amino-acid chain; its full sequence is Rhodopsin (378 aa).

The Extracellular portion of the chain corresponds to 1-53 (MMSIASGPSHAAYTWASQGGGFGNQTVVDKVPPEMLHMVDAHWYQFPPMNPLW). A glycan (N-linked (GlcNAc...) asparagine) is linked at asparagine 24. The chain crosses the membrane as a helical span at residues 54-78 (HALLGFVIGVLGVISVIGNGMVIYI). Residues 79 to 90 (FTTTKSLRTPSN) are Cytoplasmic-facing. A helical transmembrane segment spans residues 91 to 115 (LLVVNLAISDFLMMLCMSPAMVINC). Residues 116-130 (YYETWVLGPLFCELY) lie on the Extracellular side of the membrane. A disulfide bridge connects residues cysteine 127 and cysteine 204. A helical transmembrane segment spans residues 131 to 150 (GLAGSLFGCASIWTMTMIAF). Residues 151–169 (DRYNVIVKGLSAKPMTING) are Cytoplasmic-facing. The helical transmembrane segment at 170-193 (ALIRILTIWFFTLAWTIAPMFGWN) threads the bilayer. The Extracellular portion of the chain corresponds to 194 to 217 (RYVPEGNMTACGTDYLTKDLFSRS). A glycan (N-linked (GlcNAc...) asparagine) is linked at asparagine 200. Residues 218-245 (YILIYSIFVYFTPLFLIIYSYFFIIQAV) traverse the membrane as a helical segment. Residues 246-280 (AAHEKNMREQAKKMNVASLRSAENQSTSAECKLAK) are Cytoplasmic-facing. Residues 281-304 (VALMTISLWFMAWTPYLVINYSGI) form a helical membrane-spanning segment. Over 305–311 (FETTKIS) the chain is Extracellular. Residues 312 to 336 (PLFTIWGSLFAKANAVYNPIVYGIS) form a helical membrane-spanning segment. The residue at position 323 (lysine 323) is an N6-(retinylidene)lysine. Over 337-378 (HPKYRAALFQKFPSLACTTEPTGADTMSTTTTVTEGNEKPAA) the chain is Cytoplasmic.

Belongs to the G-protein coupled receptor 1 family. Opsin subfamily. In terms of processing, phosphorylated on some or all of the serine and threonine residues present in the C-terminal region.

Its subcellular location is the membrane. Visual pigments are the light-absorbing molecules that mediate vision. They consist of an apoprotein, opsin, covalently linked to cis-retinal. This Camponotus atriceps (Florida carpenter ant) protein is Rhodopsin.